A 217-amino-acid chain; its full sequence is uncharacterized protein (217 aa).

The ABC transporter domain maps to 14 to 217 (LAVNNLCIER…NELATEIISL (204 aa)). 46–53 (GEIGSGKT) serves as a coordination point for ATP.

It belongs to the ABC transporter superfamily.

This is an uncharacterized protein from Haemophilus influenzae (strain ATCC 51907 / DSM 11121 / KW20 / Rd).